Here is a 679-residue protein sequence, read N- to C-terminus: MSAMENRKNSLHGSPNGLSGLNMVLPREGDSNNGIMTTEDARNGKLKGDKDLNMKMHVGMGTTPINTRLGNTMNSDVANSMSYLLEQPQSGTLIGDRLILETSEEPVGVNLVDGQNARNNQQMLNNASHMDPAFTLPADDTMNNSAAAAAAAAAAAAASTGPSQPTMQSTPSISTGGSTNFQVQIAQRLADIDQRILRMEMLMDNVCNKIDSHSQQQSLWKNDMHQMENKVIDVLDEIKSNIFSLKRQVSNQGDGAFAAELINAISNVSNKHIRKNTYGFPAGNPQGNDMGQTMNGYNNAMQLSSMAAPMSYVPGEQVNLNQLGNSKDQIDRFLTKSANEFMLDPSGLKKRRKNPSSSNESPITLSHTKTHSTSQPINYSASLPNLNLDALSKVMLPQHQQLTHNGGSQHPLSDKSIKFGISSTSHSSSNSSDSDDEEDDIDDEEDEAEDEEDENDDSRDVNDHDNVEGRETLTKKSMKPGNSIEGRDPSGTNGTVNSTTNNHMNTIDTATNTSSQLQGTVIRSTADTENPKQESNASAAATSGAATGVATGTTTANIATSASDKLKLHGDSKKEPKFTMIKAPSSVKEIWREYTQGIDGRPSIKSLDQKFGNKWRANKNKKTYSRRKRMYKFILNGIKKGKSEEEMVQMLENKRIYKDSDGNQKKRTIGWLQQSLSGI.

Disordered regions lie at residues 1–49 (MSAM…LKGD), 344–379 (DPSGLKKRRKNPSSSNESPITLSHTKTHSTSQPINY), and 402–546 (LTHN…SGAA). A compositionally biased stretch (basic and acidic residues) spans 39-49 (EDARNGKLKGD). Composition is skewed to polar residues over residues 355–379 (PSSSNESPITLSHTKTHSTSQPINY) and 402–411 (LTHNGGSQHP). The span at 422-432 (SSTSHSSSNSS) shows a compositional bias: low complexity. Acidic residues predominate over residues 433–457 (DSDDEEDDIDDEEDEAEDEEDENDD). Over residues 458–474 (SRDVNDHDNVEGRETLT) the composition is skewed to basic and acidic residues. Positions 490 to 502 (SGTNGTVNSTTNN) are enriched in low complexity. Over residues 503-528 (HMNTIDTATNTSSQLQGTVIRSTADT) the composition is skewed to polar residues. Residues 535–546 (SNASAAATSGAA) are compositionally biased toward low complexity.

It belongs to the HOT1 family.

Its subcellular location is the nucleus. Its function is as follows. Required for a complete transcriptional response to osmotic stress. This is High-osmolarity-induced transcription protein 1 (HOT1) from Kluyveromyces lactis (strain ATCC 8585 / CBS 2359 / DSM 70799 / NBRC 1267 / NRRL Y-1140 / WM37) (Yeast).